A 313-amino-acid chain; its full sequence is Zinc transporter ZitB (313 aa).

Residues 1 to 20 (MAHSHSHTSSHLPEDNNARR) are Cytoplasmic-facing. The chain crosses the membrane as a helical span at residues 21–41 (LLYAFGVTAGFMLVEVVGGFL). The Periplasmic portion of the chain corresponds to 42–47 (SGSLAL). A helical transmembrane segment spans residues 48–68 (LADAGHMLTDTAALLFALLAV). Over 69–89 (QFSRRPPTIRHTFGWLRLTTL) the chain is Cytoplasmic. The chain crosses the membrane as a helical span at residues 90–110 (AAFVNAIALVVITILIVWEAI). At 111–121 (ERFRTPRPVEG) the chain is on the periplasmic side. Residues 122–142 (GMMMAIAVAGLLANILSFWLL) form a helical membrane-spanning segment. The Cytoplasmic portion of the chain corresponds to 143-159 (HHGSEEKNLNVRAAALH). Residues 160–180 (VLGDLLGSVGAIIAALIIIWT) traverse the membrane as a helical segment. A topological domain (periplasmic) is located at residue Gly-181. Residues 182 to 202 (WTPADPILSILVSLLVLRSAW) form a helical membrane-spanning segment. Residues 203-313 (RLLKDSVNEL…GVSGHSHHHH (111 aa)) are Cytoplasmic-facing.

This sequence belongs to the cation diffusion facilitator (CDF) transporter (TC 2.A.4) family. SLC30A subfamily.

It is found in the cell inner membrane. Functionally, involved in zinc efflux across the cytoplasmic membrane, thus reducing zinc accumulation in the cytoplasm and rendering bacteria more resistant to zinc. It may contribute to zinc homeostasis at low concentrations of zinc, whereas ZntA is required for growth at more toxic concentrations. The protein is Zinc transporter ZitB (zitB) of Escherichia coli (strain K12).